The following is a 390-amino-acid chain: Alpha-2B adrenergic receptor (390 aa).

A helical transmembrane segment spans residues 1–25 (AIATVITFLILFTIFGNSLVILAVL). Residues 26 to 36 (TSRSLRAPQNL) are Cytoplasmic-facing. Residues 37-62 (FLVSLAAADIMVATLIIPFSLANELL) traverse the membrane as a helical segment. Over 63-72 (GYWYFRRTWC) the chain is Extracellular. A disulfide bridge connects residues Cys72 and Cys151. A helical transmembrane segment spans residues 73–95 (EVYLALDVLFCTSSIVHLCAISL). The Cytoplasmic portion of the chain corresponds to 96-117 (DRYWAVSRALEYNSKRTPRRIK). A helical transmembrane segment spans residues 118–140 (CIILTVWLIAAAISLPPLIYKGD). Over 141-156 (QGPQPRGRPQCKLNQE) the chain is Extracellular. Residues 157–180 (AWYILSSSIGSFFAPCLIMILVYL) traverse the membrane as a helical segment. Over 181–354 (RIYLIAKRSH…LTREKRFTFV (174 aa)) the chain is Cytoplasmic. Disordered stretches follow at residues 191–218 (RRGP…PSAL) and 233–311 (EANG…PLQQ). The span at 280-292 (LEEEADKEEEEEC) shows a compositional bias: acidic residues. The chain crosses the membrane as a helical span at residues 355–378 (LAVVIGVFVLCWFPFFFSYSLGAI). At 379-390 (CPQHCKVPHGLF) the chain is on the extracellular side.

The protein belongs to the G-protein coupled receptor 1 family. Adrenergic receptor subfamily. ADRA2B sub-subfamily. In terms of assembly, interacts with RAB26. Interacts with PPP1R9B. Interacts with GGA1, GGA2 and GGA3.

It localises to the cell membrane. Alpha-2 adrenergic receptors mediate the catecholamine-induced inhibition of adenylate cyclase through the action of G proteins. The sequence is that of Alpha-2B adrenergic receptor (ADRA2B) from Dugong dugon (Dugong).